Reading from the N-terminus, the 249-residue chain is MTRYKAIISYDGTLFSGFQRQSQARTVQEEIEKTLQKLTGGQGIQIHGAGRTDAGVHAYGQVIHFDLEQKRDPEKLRFALDTQTPDDIDVISLEIAADDFHARYHKHFKTYEFLVDIGRPKNPMMRHYATHYPYPLDIAKMQAAIKDLVGTHDFTGFTAAGTSVKNKVRTITAATLTQDPKTGFLVFTFSGNGFLYKQVRNMVGTLLKIGNGRLPIEQIRLVLESKNRQLAGPTAAGNGLYLKEIIYEE.

Aspartate 53 (nucleophile) is an active-site residue. A substrate-binding site is contributed by tyrosine 111.

Belongs to the tRNA pseudouridine synthase TruA family. In terms of assembly, homodimer.

It catalyses the reaction uridine(38/39/40) in tRNA = pseudouridine(38/39/40) in tRNA. Its function is as follows. Formation of pseudouridine at positions 38, 39 and 40 in the anticodon stem and loop of transfer RNAs. The polypeptide is tRNA pseudouridine synthase A (Streptococcus equi subsp. equi (strain 4047)).